A 476-amino-acid polypeptide reads, in one-letter code: Inner membrane transporter YcaM (476 aa).

Topologically, residues 1 to 9 are cytoplasmic; that stretch reads MAGNVQEKQ. A helical transmembrane segment spans residues 10 to 30; the sequence is LRWYNIALMSFITVWGFGNVV. At 31–38 the chain is on the periplasmic side; it reads NNYANQGL. The helical transmembrane segment at 39–59 threads the bilayer; that stretch reads VVVFSWVFIFALYFTPYALIV. The Cytoplasmic portion of the chain corresponds to 60–80; that stretch reads GQLGSTFKDGKGGVSTWIKHT. A helical transmembrane segment spans residues 81–101; sequence MGPGLAYLAAWTYWVVHIPYL. At 102–125 the chain is on the periplasmic side; it reads AQKPQAILIALGWAMKGDGSLIKE. Residues 126-146 traverse the membrane as a helical segment; that stretch reads YSVVALQGLTLVLFIFFMWVA. At 147–154 the chain is on the cytoplasmic side; it reads SRGMKSLK. Residues 155 to 175 form a helical membrane-spanning segment; the sequence is IVGSVAGIAMFVMSLLYVAMA. Residues 176–195 lie on the Periplasmic side of the membrane; sequence VTAPAITEVHIATTNITWET. Residues 196–216 traverse the membrane as a helical segment; it reads FIPHIDFTYITTISMLVFAVG. Topologically, residues 217–240 are cytoplasmic; the sequence is GAEKISPYVNQTRNPGKEFPKGML. A helical membrane pass occupies residues 241–261; that stretch reads CLAVMVAVCAILGSLAMGMMF. Residues 262–291 lie on the Periplasmic side of the membrane; it reads DSRNIPDDLMTNGQYYAFQKLGEYYNMGNT. Residues 292–312 form a helical membrane-spanning segment; that stretch reads LMVIYAIANTLGQVAALVFSI. Residues 313–343 lie on the Cytoplasmic side of the membrane; the sequence is DAPLKVLLGDADSKYIPASLCRTNASGTPVN. The helical transmembrane segment at 344 to 364 threads the bilayer; the sequence is GYFLTLVLVAILIMLPTLGIG. At 365–375 the chain is on the periplasmic side; the sequence is DMNNLYKWLLN. The chain crosses the membrane as a helical span at residues 376-396; the sequence is LNSVVMPLRYLWVFVAFIAVV. Residues 397–414 are Cytoplasmic-facing; sequence RLAQKYKPEYVFIRNKPL. A helical membrane pass occupies residues 415–435; sequence AMTVGIWCFAFTAFACLTGIF. Topologically, residues 436–448 are periplasmic; it reads PKMEAFTAEWTFQ. A helical membrane pass occupies residues 449–469; it reads LALNVATPFVLVGLGLIFPLL. Residues 470 to 476 are Cytoplasmic-facing; the sequence is ARKANSK.

The protein belongs to the amino acid-polyamine-organocation (APC) superfamily.

Its subcellular location is the cell inner membrane. In Escherichia coli (strain K12), this protein is Inner membrane transporter YcaM (ycaM).